The chain runs to 392 residues: Imidazolonepropionase (392 aa).

Residues His69 and His71 each coordinate Fe(3+). His69 and His71 together coordinate Zn(2+). Positions 78, 136, and 163 each coordinate 4-imidazolone-5-propanoate. An N-formimidoyl-L-glutamate-binding site is contributed by Tyr136. Residue His226 participates in Fe(3+) binding. His226 serves as a coordination point for Zn(2+). Gln229 contacts 4-imidazolone-5-propanoate. Asp302 serves as a coordination point for Fe(3+). Position 302 (Asp302) interacts with Zn(2+). N-formimidoyl-L-glutamate is bound by residues Asn304 and Gly306. Residue Ser307 participates in 4-imidazolone-5-propanoate binding.

It belongs to the metallo-dependent hydrolases superfamily. HutI family. The cofactor is Zn(2+). Fe(3+) is required as a cofactor.

It is found in the cytoplasm. It catalyses the reaction 4-imidazolone-5-propanoate + H2O = N-formimidoyl-L-glutamate. Its pathway is amino-acid degradation; L-histidine degradation into L-glutamate; N-formimidoyl-L-glutamate from L-histidine: step 3/3. Functionally, catalyzes the hydrolytic cleavage of the carbon-nitrogen bond in imidazolone-5-propanoate to yield N-formimidoyl-L-glutamate. It is the third step in the universal histidine degradation pathway. The protein is Imidazolonepropionase of Salinispora tropica (strain ATCC BAA-916 / DSM 44818 / JCM 13857 / NBRC 105044 / CNB-440).